The primary structure comprises 108 residues: DNA-directed RNA polymerase subunit omega (108 aa).

Residues 1–32 (MTNSQSDAALAAVPDRFDPSAGGPGAYDTPLG) are disordered.

The protein belongs to the RNA polymerase subunit omega family. The RNAP catalytic core consists of 2 alpha, 1 beta, 1 beta' and 1 omega subunit. When a sigma factor is associated with the core the holoenzyme is formed, which can initiate transcription.

The catalysed reaction is RNA(n) + a ribonucleoside 5'-triphosphate = RNA(n+1) + diphosphate. Its function is as follows. Promotes RNA polymerase assembly. Latches the N- and C-terminal regions of the beta' subunit thereby facilitating its interaction with the beta and alpha subunits. The polypeptide is DNA-directed RNA polymerase subunit omega (Mycobacterium avium (strain 104)).